The primary structure comprises 213 residues: ATP phosphoribosyltransferase (213 aa).

It belongs to the ATP phosphoribosyltransferase family. Short subfamily. In terms of assembly, heteromultimer composed of HisG and HisZ subunits.

The protein resides in the cytoplasm. It carries out the reaction 1-(5-phospho-beta-D-ribosyl)-ATP + diphosphate = 5-phospho-alpha-D-ribose 1-diphosphate + ATP. It functions in the pathway amino-acid biosynthesis; L-histidine biosynthesis; L-histidine from 5-phospho-alpha-D-ribose 1-diphosphate: step 1/9. Functionally, catalyzes the condensation of ATP and 5-phosphoribose 1-diphosphate to form N'-(5'-phosphoribosyl)-ATP (PR-ATP). Has a crucial role in the pathway because the rate of histidine biosynthesis seems to be controlled primarily by regulation of HisG enzymatic activity. This chain is ATP phosphoribosyltransferase (hisG), found in Bacillus subtilis (strain 168).